Reading from the N-terminus, the 1287-residue chain is SCL-interrupting locus protein (1287 aa).

Met-1 bears the N-acetylmethionine mark. The segment at Met-1–Asn-1018 is interaction with RBM14. Residues Tyr-231–Gly-781 form an interaction with CPAP region. Disordered stretches follow at residues Arg-378 to Ile-417 and Pro-508 to Asp-533. The residue at position 395 (Ser-395) is a Phosphoserine. Residues His-517–Gly-529 are compositionally biased toward polar residues. Positions Pro-584–Ser-779 are PIN1-binding. Residues Ser-753, Ser-779, and Ser-1135 each carry the phosphoserine modification.

In terms of assembly, homodimer. Interacts with PIN1 via its WW domain. This interaction is dependent on STIL mitotic phosphorylation. Interacts with CPAP. Interacts with RBM14 and this interaction interferes with the interaction of STIL with CPAP. Forms a complex with CPAP and SASS6. Interacts (via N-terminus) with CEP85; this interaction is essential for efficient centriolar targeting of STIL and subsequent PLK4 activation. Post-translationally, ubiquitinated. In terms of processing, phosphorylated following the activation of the mitotic checkpoint. In terms of tissue distribution, expressed in all hematopoietic tissues and cell lines. Highly expressed in a variety of tumors characterized by increased mitotic activity with highest expression in lung cancer.

It is found in the cytoplasm. The protein resides in the cytosol. The protein localises to the cytoskeleton. It localises to the microtubule organizing center. Its subcellular location is the centrosome. It is found in the centriole. The protein resides in the cell cortex. Immediate-early gene. Plays an important role in embryonic development as well as in cellular growth and proliferation; its long-term silencing affects cell survival and cell cycle distribution as well as decreases CDK1 activity correlated with reduced phosphorylation of CDK1. Plays a role as a positive regulator of the sonic hedgehog pathway, acting downstream of PTCH1. Plays an important role in the regulation of centriole duplication. Required for the onset of procentriole formation and proper mitotic progression. During procentriole formation, is essential for the correct loading of SASS6 and CPAP to the base of the procentriole to initiate procentriole assembly. In complex with STIL acts as a modulator of PLK4-driven cytoskeletal rearrangements and directional cell motility. In Homo sapiens (Human), this protein is SCL-interrupting locus protein (STIL).